Here is a 694-residue protein sequence, read N- to C-terminus: Elongation factor G (694 aa).

In terms of domain architecture, tr-type G spans 8–284 (EKLRNIGIVA…AVIDFLPSPV (277 aa)). GTP contacts are provided by residues 17–24 (AHIDAGKT), 81–85 (DTPGH), and 135–138 (NKMD).

It belongs to the TRAFAC class translation factor GTPase superfamily. Classic translation factor GTPase family. EF-G/EF-2 subfamily.

It localises to the cytoplasm. Functionally, catalyzes the GTP-dependent ribosomal translocation step during translation elongation. During this step, the ribosome changes from the pre-translocational (PRE) to the post-translocational (POST) state as the newly formed A-site-bound peptidyl-tRNA and P-site-bound deacylated tRNA move to the P and E sites, respectively. Catalyzes the coordinated movement of the two tRNA molecules, the mRNA and conformational changes in the ribosome. The chain is Elongation factor G from Persephonella marina (strain DSM 14350 / EX-H1).